Reading from the N-terminus, the 344-residue chain is 5-formaminoimidazole-4-carboxamide-1-(beta)-D-ribofuranosyl 5'-monophosphate synthetase (344 aa).

His-31 and Ser-96 together coordinate 5-amino-1-(5-phospho-beta-D-ribosyl)imidazole-4-carboxamide. Residues 130–324 (MELLQRAGVP…YFDRPMDMGE (195 aa)) form the ATP-grasp domain. ATP-binding positions include 153–198 (PVIV…VPAY) and Glu-220. Asn-240 is a 5-amino-1-(5-phospho-beta-D-ribosyl)imidazole-4-carboxamide binding site. Residues Glu-279 and Glu-292 each coordinate Mg(2+).

Belongs to the phosphohexose mutase family. It depends on Mg(2+) as a cofactor. The cofactor is Mn(2+).

The enzyme catalyses 5-amino-1-(5-phospho-beta-D-ribosyl)imidazole-4-carboxamide + formate + ATP = 5-formamido-1-(5-phospho-D-ribosyl)imidazole-4-carboxamide + ADP + phosphate. The protein operates within purine metabolism; IMP biosynthesis via de novo pathway; 5-formamido-1-(5-phospho-D-ribosyl)imidazole-4-carboxamide from 5-amino-1-(5-phospho-D-ribosyl)imidazole-4-carboxamide (formate route): step 1/1. In terms of biological role, catalyzes the ATP- and formate-dependent formylation of 5-aminoimidazole-4-carboxamide-1-beta-d-ribofuranosyl 5'-monophosphate (AICAR) to 5-formaminoimidazole-4-carboxamide-1-beta-d-ribofuranosyl 5'-monophosphate (FAICAR) in the absence of folates. This is 5-formaminoimidazole-4-carboxamide-1-(beta)-D-ribofuranosyl 5'-monophosphate synthetase from Pyrobaculum neutrophilum (strain DSM 2338 / JCM 9278 / NBRC 100436 / V24Sta) (Thermoproteus neutrophilus).